We begin with the raw amino-acid sequence, 182 residues long: Small ribosomal subunit protein uS4c (182 aa).

An S4 RNA-binding domain is found at 82 to 143 (MRLDNILFRL…KQRSKALIQN (62 aa)).

The protein belongs to the universal ribosomal protein uS4 family. In terms of assembly, part of the 30S ribosomal subunit. Contacts protein S5. The interaction surface between S4 and S5 is involved in control of translational fidelity.

It is found in the plastid. Its subcellular location is the chloroplast. Functionally, one of the primary rRNA binding proteins, it binds directly to 16S rRNA where it nucleates assembly of the body of the 30S subunit. With S5 and S12 plays an important role in translational accuracy. This Iris domestica (Leopard lily) protein is Small ribosomal subunit protein uS4c (rps4).